Here is a 296-residue protein sequence, read N- to C-terminus: Giardin subunit alpha-2 (296 aa).

Annexin repeat units follow at residues 2 to 71 (PKLS…MDLF), 73 to 143 (DRHE…MEKW), 153 to 223 (GSPD…AHFA), and 226 to 293 (GMHK…TLWR).

Belongs to the annexin family. Giardin subunit alpha subfamily.

It localises to the cytoplasm. The protein resides in the cytoskeleton. Its function is as follows. Giardins are involved in parasite attachment to the intestinal mucosa and in the cytoskeletal disassembly and reassembly that marks the transition from infectious trophozoite to transmissible cyst. They may interact with other cytoskeletal proteins such as microtubules in the microribbons or crossbridges, to maintain the integrity of the ventral disk. The protein is Giardin subunit alpha-2 of Giardia intestinalis (Giardia lamblia).